A 583-amino-acid polypeptide reads, in one-letter code: ATP-dependent lipid A-core flippase (583 aa).

The next 7 membrane-spanning stretches (helical) occupy residues 18–38 (LWPI…TLII), 65–85 (IFMW…MSGF), 105–127 (LLFN…ATLM), 143–163 (GALI…IMMF), 167–187 (WQLS…IKLV), 252–272 (VFEP…LYIA), and 277–297 (VIEM…IALM). Residues 30-312 (IIASITLIIN…LTNVSAQFQR (283 aa)) form the ABC transmembrane type-1 domain. The region spanning 344–580 (IIFDNVTFFY…KGVYSQLYKF (237 aa)) is the ABC transporter domain. 378-385 (GRSGSGKS) serves as a coordination point for ATP.

It belongs to the ABC transporter superfamily. Lipid exporter (TC 3.A.1.106) family. As to quaternary structure, homodimer.

Its subcellular location is the cell inner membrane. It carries out the reaction ATP + H2O + lipid A-core oligosaccharideSide 1 = ADP + phosphate + lipid A-core oligosaccharideSide 2.. Its function is as follows. Involved in lipopolysaccharide (LPS) biosynthesis. Translocates lipid A-core from the inner to the outer leaflet of the inner membrane. Transmembrane domains (TMD) form a pore in the inner membrane and the ATP-binding domain (NBD) is responsible for energy generation. The polypeptide is ATP-dependent lipid A-core flippase (Blochmanniella floridana).